A 164-amino-acid chain; its full sequence is Pleckstrin homology domain-containing family J member 1 (164 aa).

The PH domain maps to 15–108 (PAEMAAELGM…WMEALQRASY (94 aa)).

The chain is Pleckstrin homology domain-containing family J member 1 (Plekhj1) from Mus musculus (Mouse).